Here is a 126-residue protein sequence, read N- to C-terminus: Small ribosomal subunit protein uS13 (126 aa).

The disordered stretch occupies residues 101 to 126 (QKTKNNCRTRKGKKKTVANKKKKINK).

The protein belongs to the universal ribosomal protein uS13 family. Part of the 30S ribosomal subunit. Forms a loose heterodimer with protein S19. Forms two bridges to the 50S subunit in the 70S ribosome.

Functionally, located at the top of the head of the 30S subunit, it contacts several helices of the 16S rRNA. In the 70S ribosome it contacts the 23S rRNA (bridge B1a) and protein L5 of the 50S subunit (bridge B1b), connecting the 2 subunits; these bridges are implicated in subunit movement. Contacts the tRNAs in the A and P-sites. The sequence is that of Small ribosomal subunit protein uS13 from Karelsulcia muelleri (strain GWSS) (Sulcia muelleri).